Reading from the N-terminus, the 354-residue chain is Nicotinate-nucleotide--dimethylbenzimidazole phosphoribosyltransferase (354 aa).

The active-site Proton acceptor is E319.

This sequence belongs to the CobT family.

The catalysed reaction is 5,6-dimethylbenzimidazole + nicotinate beta-D-ribonucleotide = alpha-ribazole 5'-phosphate + nicotinate + H(+). The protein operates within nucleoside biosynthesis; alpha-ribazole biosynthesis; alpha-ribazole from 5,6-dimethylbenzimidazole: step 1/2. Functionally, catalyzes the synthesis of alpha-ribazole-5'-phosphate from nicotinate mononucleotide (NAMN) and 5,6-dimethylbenzimidazole (DMB). The protein is Nicotinate-nucleotide--dimethylbenzimidazole phosphoribosyltransferase of Pelodictyon phaeoclathratiforme (strain DSM 5477 / BU-1).